The sequence spans 145 residues: Cell division protein SepF (145 aa).

The segment at 21-41 (DKPQESTKAKEENVKPKHETP) is disordered. Residues 23–41 (PQESTKAKEENVKPKHETP) show a composition bias toward basic and acidic residues.

Belongs to the SepF family. Homodimer. Interacts with FtsZ.

Its subcellular location is the cytoplasm. Cell division protein that is part of the divisome complex and is recruited early to the Z-ring. Probably stimulates Z-ring formation, perhaps through the cross-linking of FtsZ protofilaments. Its function overlaps with FtsA. In Caldicellulosiruptor saccharolyticus (strain ATCC 43494 / DSM 8903 / Tp8T 6331), this protein is Cell division protein SepF.